Reading from the N-terminus, the 1109-residue chain is Hybrid signal transduction histidine kinase F (1109 aa).

A PAC domain is found at 237-289; it reads LSTETTITKKNGEKYPAEVFVKEISDIHSNSIGIMIIVRDITDQIRLKEMNIE. The 224-residue stretch at 324-547 folds into the Histidine kinase domain; it reads TISHEIRTPL…LFSVTLNFEQ (224 aa). The residue at position 327 (H327) is a Phosphohistidine; by autocatalysis. A coiled-coil region spans residues 719–760; sequence SNLIQTISQIDNQQQQQQQQLQQQEQEQQHQQQQLQQEQQFV. Positions 739 to 758 are enriched in low complexity; that stretch reads LQQQEQEQQHQQQQLQQEQQ. The tract at residues 739-819 is disordered; sequence LQQQEQEQQH…TSSDSGESDE (81 aa). Basic and acidic residues predominate over residues 767-782; sequence DSSEKKTTPKKDRGKY. The 121-residue stretch at 928 to 1048 folds into the Response regulatory domain; that stretch reads RILLVDDNAV…PLGELVKKYL (121 aa). D977 is modified (4-aspartylphosphate). Positions 1052 to 1099 are enriched in low complexity; it reads NNNNNNNNNNNNNNNNNSNNNNSNSNSNPNSNSNSNSNSNSNPNQNPN. A disordered region spans residues 1052–1109; it reads NNNNNNNNNNNNNNNNNSNNNNSNSNSNPNSNSNSNSNSNSNPNQNPNYCNNLPTDFI. Positions 1100-1109 are enriched in polar residues; that stretch reads YCNNLPTDFI.

It carries out the reaction ATP + protein L-histidine = ADP + protein N-phospho-L-histidine.. Acts as a receptor histidine kinase for a signal transduction pathway. This protein undergoes an ATP-dependent autophosphorylation at a conserved histidine residue in the kinase core, and a phosphoryl group is then transferred to a conserved aspartate residue in the receiver domain. The sequence is that of Hybrid signal transduction histidine kinase F (dhkF) from Dictyostelium discoideum (Social amoeba).